The chain runs to 874 residues: Alanine--tRNA ligase (874 aa).

Zn(2+) is bound by residues His-564, His-568, Cys-665, and His-669.

It belongs to the class-II aminoacyl-tRNA synthetase family. Requires Zn(2+) as cofactor.

It localises to the cytoplasm. The catalysed reaction is tRNA(Ala) + L-alanine + ATP = L-alanyl-tRNA(Ala) + AMP + diphosphate. Its function is as follows. Catalyzes the attachment of alanine to tRNA(Ala) in a two-step reaction: alanine is first activated by ATP to form Ala-AMP and then transferred to the acceptor end of tRNA(Ala). Also edits incorrectly charged Ser-tRNA(Ala) and Gly-tRNA(Ala) via its editing domain. The protein is Alanine--tRNA ligase of Burkholderia lata (strain ATCC 17760 / DSM 23089 / LMG 22485 / NCIMB 9086 / R18194 / 383).